Here is a 563-residue protein sequence, read N- to C-terminus: Cystathionine gamma-synthase-like protein ankD (563 aa).

The disordered stretch occupies residues 1–37 (MGELGPASAQHGSDSISFSGSYTQPLGAPQPPNEPHA). The span at 10–24 (QHGSDSISFSGSYTQ) shows a compositional bias: polar residues.

This sequence belongs to the trans-sulfuration enzymes family. MET7 subfamily. Pyridoxal 5'-phosphate is required as a cofactor.

It carries out the reaction cyclo(L-arginyl-(Z)-dehydro-3,4-dihydroxytyrosyl) + O-acetyl-L-homoserine = cyclo(L-arginyl-(Z)-dehydro-4-O-homoseryl-tyrosyl) + acetate + H(+). The protein operates within secondary metabolite biosynthesis. Its function is as follows. Cystathionine gamma-synthase-like protein; part of the ank cluster that mediates the biosynthesis of NK13650 C, a highly modified cyclo-arginine-tyrosine dipeptide. AnkD catalyzes the attachment of L-homoserine moiety using O-acetyl-L-homoserine as co-substrate. Within the pathway, the cyclodipeptide synthase ankA acts as the scaffold-generating enzyme and is responsible for formation of the cyclo-Arg-Tyr diketopiperazine (cRY) from L-Arg and L-Tyr. The ankA product cRY is desaturated by the cytochrome P450 monooxygenase ankB to yield a dehydro-cyclodipeptide intermediate. The FAD-dependent monooxygenase ankC then installs the m-OH, ankD catalyzes the attachment of L-homoserine, and ankE ligates citrate to the ankD product to yield NK13650 B. The O-methyltransferase ankF is responsible for methylation of the C-17 phenol group of NK13650 B to produce NK13650 D. Amidation of NK13650 D with L-Asp by ankG then leads to the production of NK13650 C, whereas amidation of NK13650 B produces NK13650 A. The chain is Cystathionine gamma-synthase-like protein ankD from Aspergillus thermomutatus (Neosartorya pseudofischeri).